Here is a 256-residue protein sequence, read N- to C-terminus: GTP cyclohydrolase FolE2 (256 aa).

This sequence belongs to the GTP cyclohydrolase IV family.

It carries out the reaction GTP + H2O = 7,8-dihydroneopterin 3'-triphosphate + formate + H(+). Its pathway is cofactor biosynthesis; 7,8-dihydroneopterin triphosphate biosynthesis; 7,8-dihydroneopterin triphosphate from GTP: step 1/1. Functionally, converts GTP to 7,8-dihydroneopterin triphosphate. The chain is GTP cyclohydrolase FolE2 from Maridesulfovibrio salexigens (strain ATCC 14822 / DSM 2638 / NCIMB 8403 / VKM B-1763) (Desulfovibrio salexigens).